A 157-amino-acid polypeptide reads, in one-letter code: S-ribosylhomocysteine lyase (157 aa).

Residues His54, His58, and Cys124 each coordinate Fe cation.

This sequence belongs to the LuxS family. In terms of assembly, homodimer. Requires Fe cation as cofactor.

The enzyme catalyses S-(5-deoxy-D-ribos-5-yl)-L-homocysteine = (S)-4,5-dihydroxypentane-2,3-dione + L-homocysteine. Involved in the synthesis of autoinducer 2 (AI-2) which is secreted by bacteria and is used to communicate both the cell density and the metabolic potential of the environment. The regulation of gene expression in response to changes in cell density is called quorum sensing. Catalyzes the transformation of S-ribosylhomocysteine (RHC) to homocysteine (HC) and 4,5-dihydroxy-2,3-pentadione (DPD). This Lactobacillus acidophilus (strain ATCC 700396 / NCK56 / N2 / NCFM) protein is S-ribosylhomocysteine lyase.